The chain runs to 224 residues: PKHD-type hydroxylase Sbal195_0750 (224 aa).

The Fe2OG dioxygenase domain occupies 78-176 (QFYPPLFNRY…RTAAFMWLQS (99 aa)). 3 residues coordinate Fe cation: His-96, Asp-98, and His-157. Position 167 (Arg-167) interacts with 2-oxoglutarate.

Fe(2+) serves as cofactor. It depends on L-ascorbate as a cofactor.

This chain is PKHD-type hydroxylase Sbal195_0750, found in Shewanella baltica (strain OS195).